We begin with the raw amino-acid sequence, 461 residues long: MDDIDSLILIGVLIALTAFFVASEFAIVRVRRSRIDQLITEGNKRAILARRVITDLDEYLSASQLGITLTSIGLGVLGEPAFERLLHPLFEPLGLPDSVSHAVSFAVAYGLITFLHVVVGELAPKTVAIQKAEQLTLLIAGPLRLFYLLLFPFIWILNGSARLLCGMFGLKPASEHDGSHSEEELRMLLSESLKNGEINPSEYKYVNKIFEFDNRIAKEIMIPRKEMAAVSTEMTMAEMLEVMLKEKYTRWPVTDGDKDSVLGLVNTKHLFSDLLFMTEEERMKMTIHPYVRPVIEVIETIPVHDLLIKMQRERIHMAILSDEYGGTSGLVTTEDILEEIVGEIRDEFDEDEQPLIQKLGDGHYVMDGKVRIDQVNSLLGASIQEDVDTIGGLILKENIDIEAGESIRIGSYTIKVLKMDGRLIKQIDIKEEAGNTTGITAHHKLPLPEPVMLNSATLSEK.

The CNNM transmembrane domain occupies 1–202 (MDDIDSLILI…LKNGEINPSE (202 aa)). 3 consecutive transmembrane segments (helical) span residues 8–28 (ILIG…FAIV), 103–123 (VSFA…GELA), and 137–157 (LLIA…IWIL). CBS domains follow at residues 221 to 280 (MIPR…MTEE) and 290 to 347 (YVRP…IRDE).

The protein belongs to the UPF0053 family.

The protein localises to the cell membrane. The sequence is that of UPF0053 protein YhdT (yhdT) from Bacillus subtilis (strain 168).